We begin with the raw amino-acid sequence, 72 residues long: Translation initiation factor IF-1 (72 aa).

The S1-like domain occupies 1–72 (MAKDDVIEIE…TKGRITYRFK (72 aa)).

This sequence belongs to the IF-1 family. Component of the 30S ribosomal translation pre-initiation complex which assembles on the 30S ribosome in the order IF-2 and IF-3, IF-1 and N-formylmethionyl-tRNA(fMet); mRNA recruitment can occur at any time during PIC assembly.

The protein resides in the cytoplasm. One of the essential components for the initiation of protein synthesis. Stabilizes the binding of IF-2 and IF-3 on the 30S subunit to which N-formylmethionyl-tRNA(fMet) subsequently binds. Helps modulate mRNA selection, yielding the 30S pre-initiation complex (PIC). Upon addition of the 50S ribosomal subunit IF-1, IF-2 and IF-3 are released leaving the mature 70S translation initiation complex. The sequence is that of Translation initiation factor IF-1 from Latilactobacillus sakei subsp. sakei (strain 23K) (Lactobacillus sakei subsp. sakei).